We begin with the raw amino-acid sequence, 152 residues long: Acidic phospholipase A2 homolog taipoxin gamma chain (152 aa).

Positions 1–19 are cleaved as a signal peptide; the sequence is MHPAHLLVLLAVCVSLLGS. 8 disulfide bridges follow: C38–C104, C42–C46, C54–C151, C56–C72, C71–C132, C78–C125, C88–C118, and C111–C123. N97 is a glycosylation site (N-linked (GlcNAc...) asparagine).

Belongs to the phospholipase A2 family. Group I subfamily. D49 sub-subfamily. As to quaternary structure, heterotrimer of alpha, beta, and gamma chains; non-covalently linked. In terms of processing, contains 0.9% fucose, 2.2% mannose, 4.2% N-acetyl-D-glucosamine, 3.5% galactose, and 3.8% N-acetyl-neuraminic acid (sialic acid). In terms of tissue distribution, expressed by the venom gland.

The protein resides in the secreted. Its function is as follows. Heterotrimer: Snake venom phospholipase A2 (PLA2) heterotrimer that acts as a potent presynaptic neurotoxin by blocking synaptic transmission and synaptic vesicle recycling. May act by binding in a calcium-dependent fashion to neurotonal pentraxin-1 (NPTX1) and neurotonal pentraxin-2 (NPTX2), but not to neuronal pentraxin receptor (NPTXR). Also binds to taipoxin-associated calcium binding protein 49 (RCN2), a protein localized in the lumen of endoplasmic reticulum. In terms of biological role, monomer (gamma chain): Snake venom phospholipase A2 homolog that is neither toxic nor enzymatically active. Does not bind calcium. The sequence is that of Acidic phospholipase A2 homolog taipoxin gamma chain from Oxyuranus scutellatus scutellatus (Australian taipan).